Reading from the N-terminus, the 403-residue chain is S-arrestin (403 aa).

Position 231 is a phosphothreonine (Thr-231). Positions 381-403 are disordered; that stretch reads RQNLKDTGENTEGKKDEDAGQDE.

The protein belongs to the arrestin family. In terms of assembly, monomer. Homodimer. Homotetramer. Interacts with RHO (via the phosphorylated C-terminus). In terms of tissue distribution, retina and pineal gland.

The protein resides in the cell projection. Its subcellular location is the cilium. It is found in the photoreceptor outer segment. It localises to the membrane. In terms of biological role, binds to photoactivated, phosphorylated RHO and terminates RHO signaling via G-proteins by competing with G-proteins for the same binding site on RHO. May play a role in preventing light-dependent degeneration of retinal photoreceptor cells. This Rattus norvegicus (Rat) protein is S-arrestin (Sag).